Reading from the N-terminus, the 95-residue chain is Protein FAM240C (95 aa).

The segment at 68-95 is disordered; sequence KMLQGPGRCPDRVPEATESLHTKDKKAA. A compositionally biased stretch (basic and acidic residues) spans 76–95; sequence CPDRVPEATESLHTKDKKAA.

This sequence belongs to the FAM240 family.

This Homo sapiens (Human) protein is Protein FAM240C (FAM240C).